The primary structure comprises 219 residues: MLNLKQIEFCLDKIGDMFPHAECELVHSNPFELVVAVALSAQCTDALVNRVTKTLFQKYKRPEDYLAVPLEELQQDIKSIGLYRNKAKNIQKLSKMIIEDYGGEVPRDRDELVKLPGVGRKTANVVVSVAFGVPAIAVDTHVERVSKRLGICRWKDSVLEVEKTLMRKVPKEDWSVTHHRLIFFGRYHCKAQSPRCAECPLLSLCREGQKRDKKGLVKR.

A HhH domain is found at 109–128 (RDELVKLPGVGRKTANVVVS). [4Fe-4S] cluster contacts are provided by C189, C196, C199, and C205.

It belongs to the Nth/MutY family. Requires [4Fe-4S] cluster as cofactor.

The catalysed reaction is 2'-deoxyribonucleotide-(2'-deoxyribose 5'-phosphate)-2'-deoxyribonucleotide-DNA = a 3'-end 2'-deoxyribonucleotide-(2,3-dehydro-2,3-deoxyribose 5'-phosphate)-DNA + a 5'-end 5'-phospho-2'-deoxyribonucleoside-DNA + H(+). In terms of biological role, DNA repair enzyme that has both DNA N-glycosylase activity and AP-lyase activity. The DNA N-glycosylase activity releases various damaged pyrimidines from DNA by cleaving the N-glycosidic bond, leaving an AP (apurinic/apyrimidinic) site. The AP-lyase activity cleaves the phosphodiester bond 3' to the AP site by a beta-elimination, leaving a 3'-terminal unsaturated sugar and a product with a terminal 5'-phosphate. This Bacillus subtilis (strain 168) protein is Endonuclease III.